Consider the following 246-residue polypeptide: Phosducin (246 aa).

Positions 1–14 (MEEAKSQSLEEDFE) are enriched in acidic residues. Positions 1–70 (MEEAKSQSLE…GKDSKERVSR (70 aa)) are disordered. A Phosducin domain is found at 1–244 (MEEAKSQSLE…LEHTKIEEED (244 aa)). Basic and acidic residues predominate over residues 60 to 69 (NGKDSKERVS). Ser-73 is subject to Phosphoserine; by PKA. The thioredoxin fold stretch occupies residues 111 to 246 (YGFVYELETG…HTKIEEEDVE (136 aa)).

The protein belongs to the phosducin family. Forms a complex with the beta and gamma subunits of the GTP-binding protein, transducin. Interacts with CRX. In terms of processing, light-induced changes in cyclic nucleotide levels modulate the phosphorylation of this protein by cAMP kinase.

It localises to the cytoplasm. It is found in the cytosol. The protein resides in the nucleus. The protein localises to the cell projection. Its subcellular location is the cilium. It localises to the photoreceptor outer segment. It is found in the photoreceptor inner segment. May participate in the regulation of visual phototransduction or in the integration of photoreceptor metabolism. Inhibits the transcriptional activation activity of the cone-rod homeobox CRX. This is Phosducin (PDC) from Homo sapiens (Human).